A 623-amino-acid polypeptide reads, in one-letter code: Quinoprotein ethanol dehydrogenase (623 aa).

The first 34 residues, 1 to 34, serve as a signal peptide directing secretion; that stretch reads MTTRTSPAPAGLLRPSLHCLAFAVALGSAGAALA. Ca(2+)-binding residues include aspartate 45, threonine 48, and aspartate 51. Residue glutamate 95 participates in pyrroloquinoline quinone binding. Cysteines 139 and 140 form a disulfide. Residues arginine 145, threonine 189, and 207–209 each bind pyrroloquinoline quinone; that span reads HGS. Position 213 (glutamate 213) interacts with Ca(2+). The tract at residues 244–281 is disordered; it reads LNGKDSTVTGDVKAPSWPDDRNSPTGKVESWSHGGGAP. Residues asparagine 300 and aspartate 350 each coordinate Ca(2+). Aspartate 350 functions as the Proton acceptor in the catalytic mechanism. Arginine 378 contributes to the pyrroloquinoline quinone binding site. Residues 413–434 are disordered; that stretch reads GRPVEREGQRPPLPEPGQKHGK. Pyrroloquinoline quinone-binding residues include tryptophan 523 and alanine 587.

This sequence belongs to the bacterial PQQ dehydrogenase family. Homodimer. Interacts with cytochrome c550. Pyrroloquinoline quinone serves as cofactor. Ca(2+) is required as a cofactor. In terms of processing, the disulfide ring formed between the two adjacent cysteine residues Cys-139 and Cys-140 is essential for efficient electron transfer at pH 7 from QEDH to its natural electron acceptor cytochrome c550.

Its subcellular location is the periplasm. The enzyme catalyses a primary alcohol + 2 Fe(III)-[cytochrome c] = an aldehyde + 2 Fe(II)-[cytochrome c] + 2 H(+). The catalysed reaction is ethanol + 2 Fe(III)-[cytochrome c] = acetaldehyde + 2 Fe(II)-[cytochrome c] + 2 H(+). It catalyses the reaction butan-1-ol + 2 Fe(III)-[cytochrome c] = butanal + 2 Fe(II)-[cytochrome c] + 2 H(+). It carries out the reaction propan-2-ol + 2 Fe(III)-[cytochrome c] = acetone + 2 Fe(II)-[cytochrome c] + 2 H(+). The enzyme catalyses 1-propanol + 2 Fe(III)-[cytochrome c] = propanal + 2 Fe(II)-[cytochrome c] + 2 H(+). The protein operates within alcohol metabolism; ethanol degradation; acetate from ethanol: step 1/2. Its activity is regulated as follows. Inhibited by cyclopropanone ethylhemiketal. Activated by ammonia (500mM), methylamine (5mM), ethylamine (5mM), octylamine (5mM), ethanolamine (5mM) and 1-amino-2-propanol (5mM), in assays using artificial electron acceptors. Ammonia is not needed for, nor does it stimulate, the ethanol-oxidizing activity when using the natural electron acceptor cytochrome c550. In terms of biological role, catalyzes the oxidation of ethanol and other primary alcohols to the corresponding aldehydes, except methanol, which is a very poor substrate. Uses a specific inducible cytochrome c550, encoded by the adjacent gene in the locus, as electron acceptor. Is a key enzyme of the carbon and energy metabolism during growth of P.aeruginosa on ethanol as the sole carbon and energy source. Is also able to use secondary alcohols as well as aminoalcohols like ethanolamine and 1-amino-2-propanol, and aldehydes as substrates. In Pseudomonas aeruginosa (strain ATCC 15692 / DSM 22644 / CIP 104116 / JCM 14847 / LMG 12228 / 1C / PRS 101 / PAO1), this protein is Quinoprotein ethanol dehydrogenase.